Here is a 208-residue protein sequence, read N- to C-terminus: High frequency lysogenization protein HflD homolog (208 aa).

The protein belongs to the HflD family.

It is found in the cytoplasm. The protein resides in the cell inner membrane. In Photorhabdus laumondii subsp. laumondii (strain DSM 15139 / CIP 105565 / TT01) (Photorhabdus luminescens subsp. laumondii), this protein is High frequency lysogenization protein HflD homolog.